Reading from the N-terminus, the 356-residue chain is Putative aminopeptidase FrvX (356 aa).

A divalent metal cation is bound by residues His61 and Asp175. Catalysis depends on Glu205, which acts as the Proton acceptor. The a divalent metal cation site is built by Glu206, Asp228, and His316.

The protein belongs to the peptidase M42 family. A divalent metal cation is required as a cofactor.

The sequence is that of Putative aminopeptidase FrvX (frvX) from Escherichia coli (strain K12).